Reading from the N-terminus, the 675-residue chain is DNA ligase 1 (675 aa).

NAD(+) contacts are provided by residues 34–38 (DFEYD), 83–84 (SL), and E114. The N6-AMP-lysine intermediate role is filled by K116. R137, E177, K295, and K319 together coordinate NAD(+). Residues C413, C416, C431, and C436 each contribute to the Zn(2+) site. The region spanning 596-675 (NSGSALAGKT…AEFLRLLSGG (80 aa)) is the BRCT domain.

The protein belongs to the NAD-dependent DNA ligase family. LigA subfamily. Mg(2+) is required as a cofactor. The cofactor is Mn(2+).

The catalysed reaction is NAD(+) + (deoxyribonucleotide)n-3'-hydroxyl + 5'-phospho-(deoxyribonucleotide)m = (deoxyribonucleotide)n+m + AMP + beta-nicotinamide D-nucleotide.. In terms of biological role, DNA ligase that catalyzes the formation of phosphodiester linkages between 5'-phosphoryl and 3'-hydroxyl groups in double-stranded DNA using NAD as a coenzyme and as the energy source for the reaction. It is essential for DNA replication and repair of damaged DNA. In Opitutus terrae (strain DSM 11246 / JCM 15787 / PB90-1), this protein is DNA ligase 1.